The following is a 345-amino-acid chain: MTLINPNIQESNKLKFKDESYLDFNSIKGGDIRHDWSSEEIKEILDLPLMDLLWRAQIVHRSYNPGYKVQLASLLSVKTGGCSEDCAYCPQSVHNETTVQPNPVIEVESVLDRARAAKDAGADRFCMGWAWREIKDGNAFDSMLEMVKGVRELGLEACVTAGMITDSQASRLAEAGLTAYNHNLDTSPEHYSKIISTRTYQDRLETLRRVRMAGITVCCGGIIGMGESVSDRASLLKVLATLDPHPESVPINALVAVEGTPMEDLSSIDPLEMVRMVATARIIMPKSRIRLSAGRQQLGREAQILCLQSGADSIFYGDTLLTTSNPEVEADRKLLADAGITANFS.

A Radical SAM core domain is found at 67–295 (YKVQLASLLS…KSRIRLSAGR (229 aa)). Positions 82, 86, and 89 each coordinate [4Fe-4S] cluster. The [2Fe-2S] cluster site is built by Cys126, Cys158, Cys218, and Arg290.

Belongs to the radical SAM superfamily. Biotin synthase family. As to quaternary structure, homodimer. It depends on [4Fe-4S] cluster as a cofactor. The cofactor is [2Fe-2S] cluster.

The enzyme catalyses (4R,5S)-dethiobiotin + (sulfur carrier)-SH + 2 reduced [2Fe-2S]-[ferredoxin] + 2 S-adenosyl-L-methionine = (sulfur carrier)-H + biotin + 2 5'-deoxyadenosine + 2 L-methionine + 2 oxidized [2Fe-2S]-[ferredoxin]. It functions in the pathway cofactor biosynthesis; biotin biosynthesis; biotin from 7,8-diaminononanoate: step 2/2. Its function is as follows. Catalyzes the conversion of dethiobiotin (DTB) to biotin by the insertion of a sulfur atom into dethiobiotin via a radical-based mechanism. This is Biotin synthase from Prochlorococcus marinus (strain NATL2A).